Here is a 181-residue protein sequence, read N- to C-terminus: Thioredoxin-like protein CITRX2, chloroplastic (181 aa).

The N-terminal 70 residues, 1-70 (MQAATLSFQP…PDVATGKYVR (70 aa)), are a transit peptide targeting the chloroplast. One can recognise a Thioredoxin domain in the interval 72-181 (DYLVKKVSAK…MMRDIINNDL (110 aa)). Catalysis depends on nucleophile residues Cys104 and Cys107. A disulfide bridge connects residues Cys104 and Cys107.

Belongs to the thioredoxin family. Plant CITRX-type subfamily.

The protein localises to the plastid. The protein resides in the chloroplast. Its function is as follows. Probable thiol-disulfide oxidoreductase that may play a role in proper chloroplast development. The protein is Thioredoxin-like protein CITRX2, chloroplastic of Nicotiana benthamiana.